Reading from the N-terminus, the 243-residue chain is Orotidine 5'-phosphate decarboxylase (243 aa).

Substrate contacts are provided by residues aspartate 16, lysine 38, 65-74 (DLKLHDIPNT), threonine 120, arginine 181, glutamine 190, glycine 210, and arginine 211. Lysine 67 serves as the catalytic Proton donor.

It belongs to the OMP decarboxylase family. Type 1 subfamily. As to quaternary structure, homodimer.

The catalysed reaction is orotidine 5'-phosphate + H(+) = UMP + CO2. Its pathway is pyrimidine metabolism; UMP biosynthesis via de novo pathway; UMP from orotate: step 2/2. Catalyzes the decarboxylation of orotidine 5'-monophosphate (OMP) to uridine 5'-monophosphate (UMP). The polypeptide is Orotidine 5'-phosphate decarboxylase (Bradyrhizobium sp. (strain BTAi1 / ATCC BAA-1182)).